A 226-amino-acid polypeptide reads, in one-letter code: Pathogenesis-related protein R major form (226 aa).

Residues 1–25 (MNFLKSFPFFAFLYFGQYFVAVTHA) form the signal peptide. 8 disulfide bridges follow: Cys34–Cys225, Cys75–Cys85, Cys90–Cys96, Cys140–Cys214, Cys145–Cys197, Cys153–Cys163, Cys167–Cys176, and Cys177–Cys184.

This sequence belongs to the thaumatin family.

It is found in the vacuole. The sequence is that of Pathogenesis-related protein R major form from Nicotiana tabacum (Common tobacco).